The sequence spans 73 residues: Putative membrane protein insertion efficiency factor (73 aa).

It belongs to the UPF0161 family.

The protein localises to the cell inner membrane. Functionally, could be involved in insertion of integral membrane proteins into the membrane. The polypeptide is Putative membrane protein insertion efficiency factor (Parabacteroides distasonis (strain ATCC 8503 / DSM 20701 / CIP 104284 / JCM 5825 / NCTC 11152)).